A 293-amino-acid polypeptide reads, in one-letter code: Acetylglutamate kinase (293 aa).

Residues 60–61, Arg82, and Asn188 contribute to the substrate site; that span reads GG.

The protein belongs to the acetylglutamate kinase family. ArgB subfamily.

It is found in the cytoplasm. The enzyme catalyses N-acetyl-L-glutamate + ATP = N-acetyl-L-glutamyl 5-phosphate + ADP. The protein operates within amino-acid biosynthesis; L-arginine biosynthesis; N(2)-acetyl-L-ornithine from L-glutamate: step 2/4. Functionally, catalyzes the ATP-dependent phosphorylation of N-acetyl-L-glutamate. This is Acetylglutamate kinase from Methanothermobacter thermautotrophicus (strain ATCC 29096 / DSM 1053 / JCM 10044 / NBRC 100330 / Delta H) (Methanobacterium thermoautotrophicum).